The chain runs to 324 residues: Beta-ketoacyl-[acyl-carrier-protein] synthase III (324 aa).

Catalysis depends on residues Cys112 and His251. An ACP-binding region spans residues 252-256; sequence QANIR. The active site involves Asn281.

It belongs to the thiolase-like superfamily. FabH family. Homodimer.

Its subcellular location is the cytoplasm. It catalyses the reaction malonyl-[ACP] + acetyl-CoA + H(+) = 3-oxobutanoyl-[ACP] + CO2 + CoA. The protein operates within lipid metabolism; fatty acid biosynthesis. Functionally, catalyzes the condensation reaction of fatty acid synthesis by the addition to an acyl acceptor of two carbons from malonyl-ACP. Catalyzes the first condensation reaction which initiates fatty acid synthesis and may therefore play a role in governing the total rate of fatty acid production. Possesses both acetoacetyl-ACP synthase and acetyl transacylase activities. Its substrate specificity determines the biosynthesis of branched-chain and/or straight-chain of fatty acids. The protein is Beta-ketoacyl-[acyl-carrier-protein] synthase III of Desulfotalea psychrophila (strain LSv54 / DSM 12343).